The following is a 125-amino-acid chain: Photoactive yellow protein (125 aa).

Positions 23–86 (LNQLAFGAIQ…GRFKEGVANG (64 aa)) constitute a PAS domain. An S-(4-hydroxycinnamyl)cysteine modification is found at cysteine 69.

It belongs to the photoactive yellow protein family. The 4-hydroxycinnamic acid (p-coumaric acid) chromophore is covalently bound via a thioester linkage.

Photoactive blue light protein. Probably functions as a photoreceptor for a negative phototaxis response. This is Photoactive yellow protein (pyp) from Halochromatium salexigens (Chromatium salexigens).